A 283-amino-acid chain; its full sequence is MKKKVLALAAAITVVAPLQSVAFAHENDGGSKIKIVHRWSAEDKHKEGVNSHLWIVNRAIDIMSRNTTLVKQDRVAQLNEWRTELENGIYAADYENPYYDNSTFASHFYDPDNGKTYIPFAKQAKETGAKYFKLAGESYKNKDMKQAFFYLGLSLHYLGDVNQPMHAANFTNLSYPQGFHSKYENFVDTIKDNYKVTDGNGYWNWKGTNPEEWIHGAAVVAKQDYSGIVNDNTKDWFVKAAVSQEYADKWRAEVTPMTGKRLMDAQRVTAGYIQLWFDTYGDR.

The signal sequence occupies residues 1–24 (MKKKVLALAAAITVVAPLQSVAFA). Residues 25 to 38 (HENDGGSKIKIVHR) constitute a propeptide that is removed on maturation. Zn(2+) is bound by residues Trp-39, His-52, Asp-93, His-107, His-156, Asp-160, His-166, His-180, and Glu-184. The Zn-dependent PLC domain maps to 39–283 (WSAEDKHKEG…QLWFDTYGDR (245 aa)).

This sequence belongs to the bacterial zinc-metallophospholipase C family. Monomer. It depends on Zn(2+) as a cofactor.

The enzyme catalyses a 1,2-diacyl-sn-glycero-3-phosphocholine + H2O = phosphocholine + a 1,2-diacyl-sn-glycerol + H(+). Its function is as follows. Required, with sphingomyelinase, to effect target cell lysis (hemolysis). The polypeptide is Phospholipase C (plc) (Bacillus cereus).